The chain runs to 260 residues: Chloride intracellular channel Clic (260 aa).

The helical transmembrane segment at 42–66 (FCQEYFMDLYLLAELKTISLKVTTV) threads the bilayer.

The protein belongs to the chloride channel CLIC family. As to expression, expressed in cardiac tubes.

The protein localises to the mitochondrion. The protein resides in the membrane. Functionally, might insert into membranes and form chloride ion channels. Channel activity depends on the pH. May play a role in ethanol sensitivity. In Drosophila melanogaster (Fruit fly), this protein is Chloride intracellular channel Clic.